The primary structure comprises 82 residues: Large ribosomal subunit protein eL14 (82 aa).

This sequence belongs to the eukaryotic ribosomal protein eL14 family.

The sequence is that of Large ribosomal subunit protein eL14 from Pyrococcus abyssi (strain GE5 / Orsay).